The primary structure comprises 156 residues: Small ribosomal subunit protein uS7 (156 aa).

It belongs to the universal ribosomal protein uS7 family. In terms of assembly, part of the 30S ribosomal subunit. Contacts proteins S9 and S11.

Its function is as follows. One of the primary rRNA binding proteins, it binds directly to 16S rRNA where it nucleates assembly of the head domain of the 30S subunit. Is located at the subunit interface close to the decoding center, probably blocks exit of the E-site tRNA. The protein is Small ribosomal subunit protein uS7 of Ralstonia nicotianae (strain ATCC BAA-1114 / GMI1000) (Ralstonia solanacearum).